The following is a 431-amino-acid chain: Serine--tRNA ligase (431 aa).

The segment at 41-66 (QSRTQELQAERNARSKSIGEAARRGE) is disordered. L-serine is bound at residue 240–242 (TSE). 271–273 (RSE) lines the ATP pocket. Glu294 is a binding site for L-serine. 358–361 (EISS) contributes to the ATP binding site. Ser392 is an L-serine binding site.

Belongs to the class-II aminoacyl-tRNA synthetase family. Type-1 seryl-tRNA synthetase subfamily. In terms of assembly, homodimer. The tRNA molecule binds across the dimer.

The protein resides in the cytoplasm. The catalysed reaction is tRNA(Ser) + L-serine + ATP = L-seryl-tRNA(Ser) + AMP + diphosphate + H(+). It carries out the reaction tRNA(Sec) + L-serine + ATP = L-seryl-tRNA(Sec) + AMP + diphosphate + H(+). It participates in aminoacyl-tRNA biosynthesis; selenocysteinyl-tRNA(Sec) biosynthesis; L-seryl-tRNA(Sec) from L-serine and tRNA(Sec): step 1/1. Catalyzes the attachment of serine to tRNA(Ser). Is also able to aminoacylate tRNA(Sec) with serine, to form the misacylated tRNA L-seryl-tRNA(Sec), which will be further converted into selenocysteinyl-tRNA(Sec). The chain is Serine--tRNA ligase from Aeromonas salmonicida (strain A449).